A 90-amino-acid polypeptide reads, in one-letter code: Small ribosomal subunit protein bS20 (90 aa).

The segment at 1–25 (MANSAQARKRARQAAKANSHNSALR) is disordered.

It belongs to the bacterial ribosomal protein bS20 family.

In terms of biological role, binds directly to 16S ribosomal RNA. The chain is Small ribosomal subunit protein bS20 from Burkholderia multivorans (strain ATCC 17616 / 249).